The following is a 325-amino-acid chain: Glycerol-3-phosphate dehydrogenase [NAD(P)+] (325 aa).

Positions 14, 15, 35, and 109 each coordinate NADPH. Positions 109 and 137 each coordinate sn-glycerol 3-phosphate. A141 lines the NADPH pocket. The sn-glycerol 3-phosphate site is built by K192, D247, S257, R258, and N259. K192 serves as the catalytic Proton acceptor. R258 contacts NADPH. The NADPH site is built by L282 and E284.

This sequence belongs to the NAD-dependent glycerol-3-phosphate dehydrogenase family.

The protein resides in the cytoplasm. It catalyses the reaction sn-glycerol 3-phosphate + NAD(+) = dihydroxyacetone phosphate + NADH + H(+). It carries out the reaction sn-glycerol 3-phosphate + NADP(+) = dihydroxyacetone phosphate + NADPH + H(+). It functions in the pathway membrane lipid metabolism; glycerophospholipid metabolism. Functionally, catalyzes the reduction of the glycolytic intermediate dihydroxyacetone phosphate (DHAP) to sn-glycerol 3-phosphate (G3P), the key precursor for phospholipid synthesis. The protein is Glycerol-3-phosphate dehydrogenase [NAD(P)+] of Rickettsia conorii (strain ATCC VR-613 / Malish 7).